The chain runs to 85 residues: U4-theraphotoxin-Hhn1a (85 aa).

Positions 1–22 (MKVTLIAILTCAAVLVLHTTAA) are cleaved as a signal peptide. Positions 23–48 (EELEAESQPMEVGMPDTELAAVDEER) are excised as a propeptide. 3 disulfide bridges follow: Cys52–Cys66, Cys56–Cys77, and Cys71–Cys82.

Belongs to the neurotoxin 12 (Hwtx-2) family. 02 (Hwtx-2) subfamily. As to quaternary structure, monomer. As to expression, expressed by the venom gland.

It is found in the secreted. Its function is as follows. Neurotoxin active on both insects and mammals. The chain is U4-theraphotoxin-Hhn1a from Cyriopagopus hainanus (Chinese bird spider).